Consider the following 252-residue polypeptide: 3-dehydroquinate dehydratase (252 aa).

3-dehydroquinate-binding positions include S21, E46 to R48, and R82. Residue H143 is the Proton donor/acceptor of the active site. K170 serves as the catalytic Schiff-base intermediate with substrate. The 3-dehydroquinate site is built by R213, S232, and Q236.

Belongs to the type-I 3-dehydroquinase family. In terms of assembly, dimer of dimers.

It catalyses the reaction 3-dehydroquinate = 3-dehydroshikimate + H2O. The protein operates within metabolic intermediate biosynthesis; chorismate biosynthesis; chorismate from D-erythrose 4-phosphate and phosphoenolpyruvate: step 3/7. Its activity is regulated as follows. Inhibited by (2R)-2-methyl-3-dehydroquinic acid. Its function is as follows. Involved in the third step of the chorismate pathway, which leads to the biosynthesis of aromatic amino acids. Catalyzes the cis-dehydration of 3-dehydroquinate (DHQ) and introduces the first double bond of the aromatic ring to yield 3-dehydroshikimate. The reaction involves the formation of an imine intermediate between the keto group of 3-dehydroquinate and the epsilon-amino group of Lys-170 at the active site. The polypeptide is 3-dehydroquinate dehydratase (Salmonella typhi).